A 1475-amino-acid polypeptide reads, in one-letter code: Sterol 3-beta-glucosyltransferase (1475 aa).

Disordered regions lie at residues 1-73 (MPPP…PPMF) and 94-218 (HDRF…EDDK). Residues 8–17 (LPLHGPAGAA) show a composition bias toward low complexity. The segment covering 30 to 40 (RVGKKLQKKRH) has biased composition (basic residues). The span at 108 to 118 (GPQRDSADRSH) shows a compositional bias: basic and acidic residues. Residues 156–168 (EKHKRKISGHKLL) are compositionally biased toward basic residues. The 46-residue stretch at 270-315 (QDIFEFDQPEAVIEEYPCWLLQSVLLQGYMYITAKHICFYSYLPKK) folds into the GRAM 1 domain. A PH domain is found at 318–413 (EVVKSGYLSK…WVKSLQRVIF (96 aa)). 3 disordered regions span residues 492 to 541 (ARLK…TTNK), 594 to 636 (SSPR…MEEP), and 653 to 715 (QILR…PVTP). The segment covering 505–531 (QQQQQQHPMQPPMQASARSSMSGSRRA) has biased composition (low complexity). 2 stretches are compositionally biased toward polar residues: residues 621-634 (QQGSTDSYVQSSME) and 653-674 (QILRGSDVFQNPTMRRSGSASR). A compositionally biased stretch (basic and acidic residues) spans 675 to 686 (TEVEKQQRRDPR). Residues 798–901 (RFRAHFALPE…RDDCAVTLLQ (104 aa)) form the GRAM 2 domain. Ser-989, Arg-990, Asp-992, Ala-1293, His-1295, His-1308, Ser-1311, Gly-1312, Thr-1313, Asp-1332, and Gln-1333 together coordinate UDP-alpha-D-glucose. A disordered region spans residues 1413-1475 (IQVEPDEDEE…RVSPSQQSVA (63 aa)). The segment covering 1416 to 1425 (EPDEDEESAE) has biased composition (acidic residues).

The protein belongs to the glycosyltransferase 28 family.

It is found in the cytoplasm. It localises to the preautophagosomal structure membrane. The catalysed reaction is a sterol + UDP-alpha-D-glucose = a sterol 3-beta-D-glucoside + UDP + H(+). It carries out the reaction ergosterol + UDP-alpha-D-glucose = ergosteryl 3-beta-D-glucoside + UDP + H(+). Sterol glycosyltransferase responsible for the glycosylation of ergosterol to form ergosterol-glucoside. Mediates autophagic degradation of peroxisomes (pexophagy) and is involved in pathogenesis via peroxisome degradation inside appressoria that are developing into the host invasion stage. The polypeptide is Sterol 3-beta-glucosyltransferase (Glomerella lagenarium (Anthracnose fungus)).